A 561-amino-acid polypeptide reads, in one-letter code: Serine palmitoyltransferase 2 (561 aa).

A helical transmembrane segment spans residues 57 to 77; the sequence is PYYISLLTYLNYLILIILGHV. K366 is subject to N6-(pyridoxal phosphate)lysine. A helical transmembrane segment spans residues 443 to 463; the sequence is LGFIVYGVADSPVIPLLLYCP.

The protein belongs to the class-II pyridoxal-phosphate-dependent aminotransferase family. In terms of assembly, LCB1 and LCB2 encode essential subunits of the enzyme and form a heterodimer. Component of the SPOTS complex, at least composed of LCB1/2 (LCB1 and/or LCB2), ORM1/2 (ORM1 and/or ORM2), SAC1 and TSC3. Interacts with LCB1 and TSC3. Requires pyridoxal 5'-phosphate as cofactor.

The protein resides in the cytoplasm. It is found in the endoplasmic reticulum. Its subcellular location is the membrane. The enzyme catalyses L-serine + hexadecanoyl-CoA + H(+) = 3-oxosphinganine + CO2 + CoA. Its pathway is lipid metabolism; sphingolipid metabolism. Catalytic subunit of serine palmitoyltransferase (SPT), which catalyzes the committed step in the synthesis of sphingolipids, the condensation of serine with palmitoyl CoA to form the long chain base 3-ketosphinganine. This chain is Serine palmitoyltransferase 2 (LCB2), found in Saccharomyces cerevisiae (strain ATCC 204508 / S288c) (Baker's yeast).